The following is a 126-amino-acid chain: Large ribosomal subunit protein mL52 (126 aa).

The N-terminal 28 residues, 1 to 28 (MLKITKICLASSATSTAQRSIALTAPRA), are a transit peptide targeting the mitochondrion.

The protein belongs to the mitochondrion-specific ribosomal protein mL52 family. In terms of assembly, component of the mitochondrial ribosome large subunit (39S) which comprises a 16S rRNA and about 50 distinct proteins.

The protein resides in the mitochondrion. The polypeptide is Large ribosomal subunit protein mL52 (mRpL52) (Drosophila melanogaster (Fruit fly)).